A 377-amino-acid polypeptide reads, in one-letter code: Fructose-bisphosphate aldolase 1, chloroplastic (377 aa).

Positions 74 and 164 each coordinate substrate. Glu-204 (proton acceptor) is an active-site residue. The active-site Schiff-base intermediate with dihydroxyacetone-P is Lys-246.

It belongs to the class I fructose-bisphosphate aldolase family.

Its subcellular location is the plastid. It localises to the chloroplast. The catalysed reaction is beta-D-fructose 1,6-bisphosphate = D-glyceraldehyde 3-phosphate + dihydroxyacetone phosphate. Its pathway is carbohydrate degradation; glycolysis; D-glyceraldehyde 3-phosphate and glycerone phosphate from D-glucose: step 4/4. The polypeptide is Fructose-bisphosphate aldolase 1, chloroplastic (ALDCHL) (Chlamydomonas reinhardtii (Chlamydomonas smithii)).